Here is a 125-residue protein sequence, read N- to C-terminus: Photoactive yellow protein (125 aa).

One can recognise a PAS domain in the interval 23–86 (IDDLAFGAIQ…GRFREGVANG (64 aa)). Position 69 is an S-(4-hydroxycinnamyl)cysteine (C69).

The protein belongs to the photoactive yellow protein family. In terms of processing, the 4-hydroxycinnamic acid (p-coumaric acid) chromophore is covalently bound via a thioester linkage.

This photoactive protein is a photoreceptor with kinetics similar to that of rhodopsin. In Rhodothalassium salexigens (Rhodospirillum salexigens), this protein is Photoactive yellow protein (pyp).